A 663-amino-acid chain; its full sequence is MPFQDYFQKKKAAFINRNNKSNADASALRDINDININFAAKSKNYVFPLTKLPDELMQEVFSHLPQPDRLQLCLVNKRLNKIATKLLYRRIYLNDSNVVKSDFMHLAINWTLLNLPSSLKEEESRDIANCKLKKLIETLQNNIHITEVIQWIRINWDLDSTLQRSILSILCNQGKSLQRLENVTDPACNDIISNGHFSRSNVSSFDMAPPNSLPEMVVPENYIPNLTKYLSQRISSRLSHMTLFIDPLKLFNYLYPLDIKLQIIDLKLHWRREFYNNDYFVKKIRPGNPLTKLSEVFDKRTLKILTIISWNDTLLKRETEMLKDFKEFENLEDLSLISIKQDVHILVDLFSSLTNLKRLKMDFLEEYVPEPTNPHIFLSILLACSKLQFIDLRYDGLIPQIINIQENKFQLNQQCNCTNCQIVFSDILKGKIFMFPEDYYIHDLQDIAAKDIFKMMKYLSLLPYSKACDAYPSVRTQPMNLTNFVTKMNRNLLEYRNSKSQLVPKIVNNPHQHSTVTSTSTAHMSEPEMIIIDDDDDDDEINAAIPPSSDDTAATISTDLELPHESLTKRDIIMCYHALIHHFKSIYVTFLKSFPHLRFLMLNDIPTIVMEENNERIFEPVFYHYDYKSNLYGWSKESNKNLENDSNNNNNNSDTIARIATVM.

The F-box domain maps to 46 to 91 (VFPLTKLPDELMQEVFSHLPQPDRLQLCLVNKRLNKIATKLLYRRI).

Interacts with SKP1. Component of the probable SCF(DAS1) complex containing CDC53, SKP1, RBX1 and DAS1.

Its pathway is protein modification; protein ubiquitination. Functionally, substrate recognition component of a SCF (SKP1-CUL1-F-box protein) E3 ubiquitin-protein ligase complex which mediates the ubiquitination and subsequent proteasomal degradation of target proteins. Probably recognizes and binds to phosphorylated target proteins. The sequence is that of F-box protein DAS1 (DAS1) from Saccharomyces cerevisiae (strain ATCC 204508 / S288c) (Baker's yeast).